Consider the following 361-residue polypeptide: Mannose-1-phosphate guanylyltransferase 1 (361 aa).

Residues L6 and V7 each contribute to the GDP-alpha-D-mannose site. The diphosphate site is built by G9, G11, T12, R13, and K23. Residues G85, N109, D111, G146, and N173 each coordinate GDP-alpha-D-mannose.

This sequence belongs to the transferase hexapeptide repeat family. As to quaternary structure, interacts in vitro with CSN5A and CSN5B, but in planta only with CSN5B, which targets CYT1 for degradation in the dark by the 26S proteasome. Forms homodimers in the unliganded structure. The product-bound structure is composed of six dimers that form a dodecameric assembly.

The protein resides in the cytoplasm. Its subcellular location is the nucleus. The enzyme catalyses alpha-D-mannose 1-phosphate + GTP + H(+) = GDP-alpha-D-mannose + diphosphate. It functions in the pathway nucleotide-sugar biosynthesis; GDP-alpha-D-mannose biosynthesis; GDP-alpha-D-mannose from alpha-D-mannose 1-phosphate (GTP route): step 1/1. Functionally, essential protein during embryogenesis. Catalyzes a reaction of the Smirnoff-Wheeler pathway, the major route to ascorbate biosynthesis in plants. Plays an essential role in plant growth and development and cell-wall architecture. Provides GDP-mannose, used for cell wall carbohydrate biosynthesis, protein N-glycosylation, as well as for the biosynthesis of the antioxidant ascorbate. This is Mannose-1-phosphate guanylyltransferase 1 from Arabidopsis thaliana (Mouse-ear cress).